We begin with the raw amino-acid sequence, 538 residues long: CTP synthase (538 aa).

The amidoligase domain stretch occupies residues 1–269; it reads MSPRKYVIVT…ARLVERRLFG (269 aa). Residue Ser-15 participates in CTP binding. Ser-15 is a UTP binding site. 16–21 provides a ligand contact to ATP; that stretch reads SVGKGL. Residue Tyr-56 coordinates L-glutamine. Residue Asp-73 coordinates ATP. Mg(2+) is bound by residues Asp-73 and Glu-143. CTP contacts are provided by residues 150-152, 190-195, and Lys-226; these read DIE and KTKPVQ. Residues 190–195 and Lys-226 each bind UTP; that span reads KTKPVQ. The Glutamine amidotransferase type-1 domain occupies 294 to 538; that stretch reads KVAMVGKYTK…FVTAVARLRG (245 aa). Gly-358 contacts L-glutamine. The Nucleophile; for glutamine hydrolysis role is filled by Cys-385. L-glutamine-binding positions include 386-389, Glu-409, and Arg-466; that span reads FGMQ. Residues His-512 and Glu-514 contribute to the active site.

The protein belongs to the CTP synthase family. Homotetramer.

It carries out the reaction UTP + L-glutamine + ATP + H2O = CTP + L-glutamate + ADP + phosphate + 2 H(+). The catalysed reaction is L-glutamine + H2O = L-glutamate + NH4(+). The enzyme catalyses UTP + NH4(+) + ATP = CTP + ADP + phosphate + 2 H(+). It participates in pyrimidine metabolism; CTP biosynthesis via de novo pathway; CTP from UDP: step 2/2. With respect to regulation, allosterically activated by GTP, when glutamine is the substrate; GTP has no effect on the reaction when ammonia is the substrate. The allosteric effector GTP functions by stabilizing the protein conformation that binds the tetrahedral intermediate(s) formed during glutamine hydrolysis. Inhibited by the product CTP, via allosteric rather than competitive inhibition. Functionally, catalyzes the ATP-dependent amination of UTP to CTP with either L-glutamine or ammonia as the source of nitrogen. Regulates intracellular CTP levels through interactions with the four ribonucleotide triphosphates. The chain is CTP synthase from Aeropyrum pernix (strain ATCC 700893 / DSM 11879 / JCM 9820 / NBRC 100138 / K1).